Reading from the N-terminus, the 375-residue chain is Antichymotrypsin-2 (375 aa).

It belongs to the serpin family. In terms of tissue distribution, hemolymph.

It is found in the secreted. The sequence is that of Antichymotrypsin-2 from Bombyx mori (Silk moth).